The primary structure comprises 30 residues: Photosystem I reaction center subunit XII (30 aa).

A helical transmembrane segment spans residues 7–27; it reads VFIGLVIALVPAILAFKLGLS.

It belongs to the PsaM family.

Its subcellular location is the plastid. The protein localises to the chloroplast thylakoid membrane. This chain is Photosystem I reaction center subunit XII, found in Cyanidium caldarium (Red alga).